Here is a 943-residue protein sequence, read N- to C-terminus: Receptor-like protein 35 (943 aa).

A signal peptide spans 1-31 (MTGSWNPTSIIIPVTLSFLLSFIHNFADVVA). Residues 32–897 (APTRHLCLPE…EEEDEEEISW (866 aa)) are Extracellular-facing. 8 N-linked (GlcNAc...) asparagine glycosylation sites follow: Asn-67, Asn-82, Asn-118, Asn-147, Asn-171, Asn-195, Asn-219, and Asn-222. 11 LRR repeats span residues 124 to 148 (LQNL…IGNL), 150 to 171 (HLTS…SIEN), 172 to 196 (LSRL…IGNL), 198 to 220 (HLTS…IGNL), 222 to 244 (NLTF…IGNL), 245 to 267 (ARLT…SFGN), 268 to 292 (LNQL…LLNL), 293 to 317 (TRLS…SLLS), 319 to 340 (LMDF…LFNI), 341 to 364 (PPLI…NISS), and 366 to 389 (SNLQ…LSRF). N-linked (GlcNAc...) asparagine glycans are attached at residues Asn-291 and Asn-312. 2 N-linked (GlcNAc...) asparagine glycosylation sites follow: Asn-354 and Asn-361. One copy of the LRR 12; degenerate repeat lies at 390-414 (VNLTLFDLSHLNTQCRPVDFSIFSH). N-linked (GlcNAc...) asparagine glycosylation is present at Asn-391. LRR repeat units lie at residues 415–439 (LKSL…ILPY), 440–463 (FKTL…SVSS), 467–490 (SQSI…LRTQ), 491–514 (HELG…LWTL), 515–537 (PNLF…SKKH), 544–568 (KPSM…ICGL), 569–592 (RSLN…MEKL), 593–617 (KSTL…IFES), 619–639 (RSLD…LIRF), 640–665 (SNLE…SLSK), 667–685 (QVLV…EATF), 686–709 (PELR…YFVK), 753–777 (LTIY…IGLL), 778–801 (KELL…MGNL), 802–825 (TALE…LGDL), and 827–850 (FLAY…QFRR). Asn-457 is a glycosylation site (N-linked (GlcNAc...) asparagine). Asn-521, Asn-524, Asn-556, Asn-582, and Asn-605 each carry an N-linked (GlcNAc...) asparagine glycan. An N-linked (GlcNAc...) asparagine glycan is attached at Asn-653. Asn-699 is a glycosylation site (N-linked (GlcNAc...) asparagine). N-linked (GlcNAc...) asparagine glycosylation is found at Asn-784 and Asn-800. 3 N-linked (GlcNAc...) asparagine glycosylation sites follow: Asn-832, Asn-852, and Asn-882. Residues 898–918 (IAAAIGFIPGIVFGLTIGYIL) form a helical membrane-spanning segment. At 919-943 (VSYKPEWFMNPFGRNNRRRRNTTTH) the chain is on the cytoplasmic side.

Belongs to the RLP family.

It localises to the cell membrane. The protein is Receptor-like protein 35 of Arabidopsis thaliana (Mouse-ear cress).